The sequence spans 1690 residues: DNA-directed RNA polymerase subunit beta' (1690 aa).

Cysteine 63, cysteine 65, cysteine 78, and cysteine 81 together coordinate Zn(2+). 3 residues coordinate Mg(2+): aspartate 753, aspartate 755, and aspartate 757. Positions 1107, 1295, 1302, and 1305 each coordinate Zn(2+).

Belongs to the RNA polymerase beta' chain family. In terms of assembly, the RNAP catalytic core consists of 2 alpha, 1 beta, 1 beta' and 1 omega subunit. When a sigma factor is associated with the core the holoenzyme is formed, which can initiate transcription. It depends on Mg(2+) as a cofactor. Zn(2+) is required as a cofactor.

It carries out the reaction RNA(n) + a ribonucleoside 5'-triphosphate = RNA(n+1) + diphosphate. Its function is as follows. DNA-dependent RNA polymerase catalyzes the transcription of DNA into RNA using the four ribonucleoside triphosphates as substrates. This Thermotoga neapolitana (strain ATCC 49049 / DSM 4359 / NBRC 107923 / NS-E) protein is DNA-directed RNA polymerase subunit beta'.